A 365-amino-acid chain; its full sequence is DNA polymerase IV 1 (365 aa).

Positions Val-6–Gly-196 constitute a UmuC domain. The Mg(2+) site is built by Asp-10 and Asp-113. Glu-114 is an active-site residue.

It belongs to the DNA polymerase type-Y family. Monomer. Mg(2+) is required as a cofactor.

The protein resides in the cytoplasm. It carries out the reaction DNA(n) + a 2'-deoxyribonucleoside 5'-triphosphate = DNA(n+1) + diphosphate. Its function is as follows. Poorly processive, error-prone DNA polymerase involved in untargeted mutagenesis. Copies undamaged DNA at stalled replication forks, which arise in vivo from mismatched or misaligned primer ends. These misaligned primers can be extended by PolIV. Exhibits no 3'-5' exonuclease (proofreading) activity. May be involved in translesional synthesis. This is DNA polymerase IV 1 (dbh1) from Methanosarcina mazei (strain ATCC BAA-159 / DSM 3647 / Goe1 / Go1 / JCM 11833 / OCM 88) (Methanosarcina frisia).